The following is a 739-amino-acid chain: MNNPSETSKPSMESGDGNTGTQTNGLDFQKQPVPVGGPISTAQAQAFLGHLHQVQLAGTSLQAAAQSLNVQSKSNEESGDSQQPSQPSQQPSVQAAIPQTQLMLAGGQITGLTLTPAQQQLLLQQAQAQLLAAAVQHSASQQHSAAGATISASAATPMTQIPLSQPIQIAQHLQQLQQQNLNLQQFVLVHPTTNLQPAQFIISQTPQGQQGLLQAQNLLTQLPQQSQANLLQSQPSITLASQPATPTRTIAATPIQPLPQSQSTPKRIDTPSLEEPSDLEELEQFAKTFKQRRIKLGFTQGDVGLAMGKLYGNDFSQTTISRFEALNLSFKNMCKLKPLLEKWLNDAENLSSDSTLSSPSALNSPGQGIEGVNRRRKKRTSIETNIRVALEKSFLENQKPTSEEITMIADQLNMEKEVIRVWFCNRRQKEKRINPPSSGGTSSSPIKAIFPSPTSLVATTPSLVTSSAATTLTVNPVLPLTSPAVTSLSVTGTTETTSNNTATVISTAPPASSAVTSPSLSPSPSASASISEASSASETSTTQTTSTPLSSPLGTSQVMVTASGLQTAAAAALQGAAQLPANASLAAMAAAAGLNPGLMASSQFAAGGALLSLNPGTLGGALSPALMSNSTLATIQALASSGSLPITSLDASGNLVFANAGGTPNIVTAPLFLNPQNLSLLTSNPVSLVSAAAASAGASGPVASLHATSTSAESIQNSLLTVASASGATSTTTTASKAQ.

Over residues 1–11 the composition is skewed to polar residues; it reads MNNPSETSKPS. Disordered stretches follow at residues 1–39, 67–95, 253–277, 353–378, and 489–553; these read MNNP…GGPI, SLNV…SVQA, TPIQ…EEPS, DSTL…RRKK, and SVTG…SSPL. A compositionally biased stretch (low complexity) spans 81 to 95; the sequence is SQQPSQPSQQPSVQA. The POU-specific domain occupies 274-348; it reads EEPSDLEELE…LLEKWLNDAE (75 aa). Positions 353–364 are enriched in low complexity; it reads DSTLSSPSALNS. The homeobox DNA-binding region spans 375-434; the sequence is RRKKRTSIETNIRVALEKSFLENQKPTSEEITMIADQLNMEKEVIRVWFCNRRQKEKRIN. Low complexity predominate over residues 489–552; that stretch reads SVTGTTETTS…QTTSTPLSSP (64 aa).

It belongs to the POU transcription factor family. Class-2 subfamily. As to quaternary structure, interacts with NR3C1, AR and PGR.

It is found in the nucleus. Its function is as follows. Transcription factor that binds to the octamer motif (5'-ATTTGCAT-3') and activates the promoters of the genes for some small nuclear RNAs (snRNA) and of genes such as those for histone H2B and immunoglobulins. Modulates transcription transactivation by NR3C1, AR and PGR. In Gallus gallus (Chicken), this protein is POU domain, class 2, transcription factor 1 (POU2F1).